Consider the following 179-residue polypeptide: ATP synthase subunit delta (179 aa).

The protein belongs to the ATPase delta chain family. In terms of assembly, F-type ATPases have 2 components, F(1) - the catalytic core - and F(0) - the membrane proton channel. F(1) has five subunits: alpha(3), beta(3), gamma(1), delta(1), epsilon(1). F(0) has three main subunits: a(1), b(2) and c(10-14). The alpha and beta chains form an alternating ring which encloses part of the gamma chain. F(1) is attached to F(0) by a central stalk formed by the gamma and epsilon chains, while a peripheral stalk is formed by the delta and b chains.

It is found in the cell membrane. Functionally, f(1)F(0) ATP synthase produces ATP from ADP in the presence of a proton or sodium gradient. F-type ATPases consist of two structural domains, F(1) containing the extramembraneous catalytic core and F(0) containing the membrane proton channel, linked together by a central stalk and a peripheral stalk. During catalysis, ATP synthesis in the catalytic domain of F(1) is coupled via a rotary mechanism of the central stalk subunits to proton translocation. This protein is part of the stalk that links CF(0) to CF(1). It either transmits conformational changes from CF(0) to CF(1) or is implicated in proton conduction. This is ATP synthase subunit delta from Staphylococcus saprophyticus subsp. saprophyticus (strain ATCC 15305 / DSM 20229 / NCIMB 8711 / NCTC 7292 / S-41).